We begin with the raw amino-acid sequence, 153 residues long: Ribonuclease H (153 aa).

The RNase H type-1 domain occupies 1–141 (MKKIQLFTDG…CDDLARRAAE (141 aa)). Mg(2+) contacts are provided by aspartate 9, glutamate 47, aspartate 69, and aspartate 133.

It belongs to the RNase H family. Monomer. Requires Mg(2+) as cofactor.

The protein localises to the cytoplasm. The catalysed reaction is Endonucleolytic cleavage to 5'-phosphomonoester.. Functionally, endonuclease that specifically degrades the RNA of RNA-DNA hybrids. This chain is Ribonuclease H, found in Psychromonas ingrahamii (strain DSM 17664 / CCUG 51855 / 37).